We begin with the raw amino-acid sequence, 229 residues long: Rab-like protein 2A (229 aa).

GTP is bound by residues 28-35 (GDSAVGKS), 76-80 (DTAGQ), and 133-136 (NKID). A disordered region spans residues 200 to 229 (NLEQEEEDVPDQEQSGSIETPSEEVASPHS).

It belongs to the small GTPase superfamily. Rab family. As to quaternary structure, interacts with IFT27, IFT81, IFT172, ATP6V1E1, HK1, LDHC, MAPRE1 and HSPA2.

Plays an essential role in male fertility, sperm intra-flagellar transport, and tail assembly. Binds, in a GTP-regulated manner, to a specific set of effector proteins including key proteins involved in cilia development and function and delivers them into the growing sperm tail. This chain is Rab-like protein 2A (RABL2A), found in Pongo abelii (Sumatran orangutan).